The sequence spans 528 residues: MTSKDIIENVEKRRTFAIISHPDAGKTTITEKVLLFGNALQKAGTVKGKKSGQHAKSDWMEMEKDRGISITTSVMQFPYKDRLVNLLDTPGHEDFSEDTYRTLTAVDSCLMVIDAAKGVEQRTIKLMEVTRLRDTPIITFMNKCDRETRDPVDLMDEVEAILNIACAPITWPIGMGKEFKGIYDLLRDEVILYSSGQGHTIQEVRIIKGLDNPELESVLPNHIHDLREELELVVGASHQFDHELFLKGQLTPVYFGTALGNFGVDHVLDGLVEWAPKPLSRAAKQRVVEPLEDVFSGFIFKIQANMDPRHRDRIAFMRVCAGKYEKGMKMHHVRTGKMVSISDAVTFMAGDRTATEEAYPGDIIGLHNHGTIQIGDTFTSGETLKFAGIPNFAPEMFRRIRLLDPLKQKQLLKGLMQLSEEGAVQVFRPLRSNDLIVGAVGVLQFEVVVQRLKSEYKVDAIYEAISVATALWVESDNPLKMAEFEKKAYDNLALDGSNNLAYIAPTMVNLNLAMERYPDIRFRKTREH.

The region spanning 11–279 (EKRRTFAIIS…GLVEWAPKPL (269 aa)) is the tr-type G domain. GTP is bound by residues 20–27 (SHPDAGKT), 88–92 (DTPGH), and 142–145 (NKCD).

Belongs to the TRAFAC class translation factor GTPase superfamily. Classic translation factor GTPase family. PrfC subfamily.

Its subcellular location is the cytoplasm. In terms of biological role, increases the formation of ribosomal termination complexes and stimulates activities of RF-1 and RF-2. It binds guanine nucleotides and has strong preference for UGA stop codons. It may interact directly with the ribosome. The stimulation of RF-1 and RF-2 is significantly reduced by GTP and GDP, but not by GMP. The polypeptide is Peptide chain release factor 3 (Psychromonas ingrahamii (strain DSM 17664 / CCUG 51855 / 37)).